The following is a 465-amino-acid chain: Sensor histidine kinase ZraS (465 aa).

At 1–14 the chain is on the cytoplasmic side; it reads MSFIRLHKDAAAMW. The helical transmembrane segment at 15–35 threads the bilayer; that stretch reads LSRLLPAAIFILVGLFSIMVI. Over 36-203 the chain is Periplasmic; sequence RDYGRESAAA…ATQAREWRNT (168 aa). Residues 204 to 224 traverse the membrane as a helical segment; it reads LIVLSALAAVLLATLLAFFWY. The Cytoplasmic segment spans residues 225–465; the sequence is QRYQRSHREL…WLPVIARQQD (241 aa). The Histidine kinase domain maps to 253-461; that stretch reads GVAHEIRNPL…VFTIWLPVIA (209 aa). Phosphohistidine; by autocatalysis is present on His-256.

Autophosphorylated.

It localises to the cell inner membrane. The enzyme catalyses ATP + protein L-histidine = ADP + protein N-phospho-L-histidine.. With respect to regulation, activity of the ZraS/ZraR two-component system is repressed by the zinc-bound form of ZraP, which probably interacts with the periplasmic region of ZraS. Functionally, part of the Zra signaling pathway, an envelope stress response (ESR) system composed of the periplasmic accessory protein ZraP, the histidine kinase ZraS and the transcriptional regulator ZraR. The ZraPSR system contributes to antibiotic resistance and is important for membrane integrity in the presence of membrane-targeting biocides. ZraS is a member of the two-component regulatory system ZraS/ZraR. Functions as a membrane-associated sensor kinase that phosphorylates ZraR in response to high concentrations of Zn(2+) or Pb(2+) in the medium. This Salmonella typhi protein is Sensor histidine kinase ZraS (zraS).